The chain runs to 221 residues: Sigma non-opioid intracellular receptor 1 (221 aa).

Topologically, residues 1 to 4 are lumenal; sequence MALW. Residues 5–27 traverse the membrane as a helical segment; the sequence is RGLRAVLAVAGLAVAVQLLRGWL. Over 28–221 the chain is Cytoplasmic; sequence GSKSYVFNRE…STHLSELGFF (194 aa). Positions 96-103 are important for ligand-binding; the sequence is SLTEYVLL. The tract at residues 174-221 is C-terminal hydrophobic region; that stretch reads FIPSTLGFALADTIFSTQDFLTLFYTVKVYGKALLLETSTHLSELGFF.

The protein belongs to the ERG2 family. Homotrimer.

The protein resides in the nucleus inner membrane. Its subcellular location is the nucleus outer membrane. It localises to the nucleus envelope. It is found in the cytoplasmic vesicle. The protein localises to the endoplasmic reticulum membrane. The protein resides in the membrane. Its function is as follows. May function in lipid transport from the endoplasmic reticulum and be involved in a wide array of cellular functions probably through regulation of the biogenesis of lipid microdomains at the plasma membrane. May regulate calcium efflux at the endoplasmic reticulum. The protein is Sigma non-opioid intracellular receptor 1 (sigmar1) of Xenopus tropicalis (Western clawed frog).